A 390-amino-acid polypeptide reads, in one-letter code: MNLHEYQSKHLLKKYNIPVPASEVVFNPDAAVDAAAKIGGDRWVVKAQVHAGGRGKAGGVRLVKNKEELKSAVKALLGTRLVTYQTDERGQPVNQILVEQTSDIARELYLGAVIDRASQRIVFMASTEGGVEIEKVAEKSPEKILKVTIDPAIGLQPFQCRQLFFGLGLQDLKQMRSFTDIVMGLYRLFTERDLSLLEINPLVITGSGELICLDAKINIDDSALYRQSELREMRDTTQEDEHETMAQQWELNYIKLDGNIGCMVNGAGLAMATMDLIKLSGGDPANFLDVGGSATKERVTEAFKIIVSDKNVKGILVNIFGGIVRCDLIADGIISAVKEVGIDVPVVVRLEGNNAQLGAKKLADSGMNIIAAKGFADAAEQIVKQVGVIA.

One can recognise an ATP-grasp domain in the interval 9–245 (KHLLKKYNIP…TTQEDEHETM (237 aa)). Residues Lys46, 53-55 (GRG), Glu99, Ser102, and Glu107 each bind ATP. Positions 200 and 214 each coordinate Mg(2+). Substrate contacts are provided by residues Asn265 and 322 to 324 (GIV).

It belongs to the succinate/malate CoA ligase beta subunit family. As to quaternary structure, heterotetramer of two alpha and two beta subunits. It depends on Mg(2+) as a cofactor.

It carries out the reaction succinate + ATP + CoA = succinyl-CoA + ADP + phosphate. The catalysed reaction is GTP + succinate + CoA = succinyl-CoA + GDP + phosphate. Its pathway is carbohydrate metabolism; tricarboxylic acid cycle; succinate from succinyl-CoA (ligase route): step 1/1. Functionally, succinyl-CoA synthetase functions in the citric acid cycle (TCA), coupling the hydrolysis of succinyl-CoA to the synthesis of either ATP or GTP and thus represents the only step of substrate-level phosphorylation in the TCA. The beta subunit provides nucleotide specificity of the enzyme and binds the substrate succinate, while the binding sites for coenzyme A and phosphate are found in the alpha subunit. This chain is Succinate--CoA ligase [ADP-forming] subunit beta, found in Coxiella burnetii (strain RSA 493 / Nine Mile phase I).